The chain runs to 515 residues: ATP synthase subunit alpha (515 aa).

G171 to T178 is an ATP binding site.

This sequence belongs to the ATPase alpha/beta chains family. In terms of assembly, F-type ATPases have 2 components, CF(1) - the catalytic core - and CF(0) - the membrane proton channel. CF(1) has five subunits: alpha(3), beta(3), gamma(1), delta(1), epsilon(1). CF(0) has three main subunits: a(1), b(2) and c(9-12). The alpha and beta chains form an alternating ring which encloses part of the gamma chain. CF(1) is attached to CF(0) by a central stalk formed by the gamma and epsilon chains, while a peripheral stalk is formed by the delta and b chains.

Its subcellular location is the cell inner membrane. It catalyses the reaction ATP + H2O + 4 H(+)(in) = ADP + phosphate + 5 H(+)(out). Produces ATP from ADP in the presence of a proton gradient across the membrane. The alpha chain is a regulatory subunit. The sequence is that of ATP synthase subunit alpha from Xanthomonas axonopodis pv. citri (strain 306).